We begin with the raw amino-acid sequence, 908 residues long: Protein translocase subunit SecA (908 aa).

Residues glutamine 87, 105–109 (GEGKT), and aspartate 512 each bind ATP. The interval 865-908 (GGDDGSDEMMAHTPMIRDGDKVGRNDPCPCGSGRKYKQCHGKLS) is disordered. Residues 879–888 (MIRDGDKVGR) show a composition bias toward basic and acidic residues. The Zn(2+) site is built by cysteine 892, cysteine 894, cysteine 903, and histidine 904. Residues 898-908 (RKYKQCHGKLS) show a composition bias toward basic residues.

It belongs to the SecA family. Monomer and homodimer. Part of the essential Sec protein translocation apparatus which comprises SecA, SecYEG and auxiliary proteins SecDF-YajC and YidC. Zn(2+) serves as cofactor.

The protein resides in the cell inner membrane. It localises to the cytoplasm. It carries out the reaction ATP + H2O + cellular proteinSide 1 = ADP + phosphate + cellular proteinSide 2.. In terms of biological role, part of the Sec protein translocase complex. Interacts with the SecYEG preprotein conducting channel. Has a central role in coupling the hydrolysis of ATP to the transfer of proteins into and across the cell membrane, serving both as a receptor for the preprotein-SecB complex and as an ATP-driven molecular motor driving the stepwise translocation of polypeptide chains across the membrane. The chain is Protein translocase subunit SecA from Shewanella sp. (strain ANA-3).